The sequence spans 435 residues: Uracil permease (435 aa).

A run of 12 helical transmembrane segments spans residues 17-37, 42-62, 67-87, 91-111, 122-142, 161-181, 191-213, 234-254, 311-331, 336-356, 376-396, and 399-419; these read FSWV…TILV, GMSP…YLLI, IPAY…VKAT, GAAM…ALLI, ILPP…LAST, LKHF…AIFL, LIGI…QPVL, VTLG…SEHI, VFSV…GFIG, LISS…FGII, NLII…IQVS, and GFQV…NLIL.

The protein belongs to the nucleobase:cation symporter-2 (NCS2) (TC 2.A.40) family.

The protein localises to the cell membrane. Its function is as follows. Transport of uracil in the cell. In Bacillus subtilis (strain 168), this protein is Uracil permease (pyrP).